The sequence spans 101 residues: Small ribosomal subunit protein uS14 (101 aa).

Belongs to the universal ribosomal protein uS14 family. As to quaternary structure, part of the 30S ribosomal subunit. Contacts proteins S3 and S10.

Functionally, binds 16S rRNA, required for the assembly of 30S particles and may also be responsible for determining the conformation of the 16S rRNA at the A site. The protein is Small ribosomal subunit protein uS14 of Chromohalobacter salexigens (strain ATCC BAA-138 / DSM 3043 / CIP 106854 / NCIMB 13768 / 1H11).